The sequence spans 72 residues: Neuropeptide IMFamide (72 aa).

Positions 1 to 24 (MMRFTIGVVCLVAVLLSLAEVSEA) are cleaved as a signal peptide. Position 36 is a phenylalanine amide (F36). Residues 40 to 72 (GPTEYDQRGKTFTALCEIATEACQAWFPSTENK) constitute a propeptide that is removed on maturation.

In terms of tissue distribution, expressed in corpora cardiaca (CC), corpora allata (CA), antennal lobe (AL) and gnathal ganglion (GNG) (at protein level). Expression detected in only a few animals (at protein level).

It localises to the secreted. This is Neuropeptide IMFamide from Agrotis ipsilon (Black cutworm moth).